Reading from the N-terminus, the 243-residue chain is Leucinostatins biosynthesis cluster protein S (243 aa).

In terms of biological role, part of the gene cluster that mediates the biosynthesis of the lipopeptide antibiotics leucinostatins that show extensive biological activities, including antimalarial, antiviral, antibacterial, antifungal, and antitumor activities, as well as phytotoxic. The function of lcsS within the leucinostatins biosynthesis has not been identified yet. In Purpureocillium lilacinum (Paecilomyces lilacinus), this protein is Leucinostatins biosynthesis cluster protein S.